A 686-amino-acid polypeptide reads, in one-letter code: Kinesin light chain (686 aa).

Disordered stretches follow at residues 1–23 (MSGS…SQEQ) and 158–204 (KYDE…SVSA). Residues 20–160 (SQEQIITGTR…EYMNSIKKYD (141 aa)) adopt a coiled-coil conformation. 6 TPR repeats span residues 215–248 (LRTL…LEKT), 257–290 (ATML…REKT), 299–332 (AATL…REKV), 341–374 (AKQL…YEKK), 383–416 (AKTK…AHER), and 472–505 (TTTL…RRNA). 2 disordered regions span residues 520 to 558 (QDLS…YEKT) and 586 to 686 (GYVE…SGNF). The segment covering 675-686 (DNLSSRRQSGNF) has biased composition (polar residues).

It belongs to the kinesin light chain family. In terms of assembly, oligomeric complex composed of two heavy chains and two light chains. Phosphorylation may modulate the process of mechanochemical coupling.

The protein localises to the cytoplasm. The protein resides in the cytoskeleton. In terms of biological role, kinesin is a microtubule-associated force-producing protein that may play a role in organelle transport. The light chain may function in coupling of cargo to the heavy chain or in the modulation of its ATPase activity. The chain is Kinesin light chain from Strongylocentrotus purpuratus (Purple sea urchin).